The primary structure comprises 686 residues: Translation initiation factor IF-2 (686 aa).

Positions 53-105 are disordered; it reads EKPSVADEFEVEEKVVRSKKNSNKKKKKGKGNEDKRQENFAGRQQTQTVETPD. Residues 69–81 show a composition bias toward basic residues; it reads RSKKNSNKKKKKG. The tr-type G domain maps to 188–357; sequence ERPAVVTIMG…LLVSEVEEYK (170 aa). The interval 197–204 is G1; the sequence is GHVDHGKT. 197-204 lines the GTP pocket; that stretch reads GHVDHGKT. The tract at residues 222-226 is G2; sequence GITQH. Positions 243-246 are G3; sequence DTPG. GTP-binding positions include 243–247 and 297–300; these read DTPGH and NKMD. Positions 297–300 are G4; it reads NKMD. A G5 region spans residues 333–335; it reads SAI.

This sequence belongs to the TRAFAC class translation factor GTPase superfamily. Classic translation factor GTPase family. IF-2 subfamily.

The protein resides in the cytoplasm. One of the essential components for the initiation of protein synthesis. Protects formylmethionyl-tRNA from spontaneous hydrolysis and promotes its binding to the 30S ribosomal subunits. Also involved in the hydrolysis of GTP during the formation of the 70S ribosomal complex. The protein is Translation initiation factor IF-2 of Bacillus cereus (strain ATCC 10987 / NRS 248).